A 300-amino-acid polypeptide reads, in one-letter code: uncharacterized protein (300 aa).

Residues 1-7 lie on the Periplasmic side of the membrane; sequence MGSTRKG. A helical transmembrane segment spans residues 8 to 28; sequence MLNVLIAAVLWGSSGVCAQYI. In terms of domain architecture, EamA 1 spans 16-145; that stretch reads VLWGSSGVCA…SLIGTFLLVT (130 aa). Over 29–45 the chain is Cytoplasmic; sequence MEQSRMSSQFLTMIRLL. A helical membrane pass occupies residues 46-66; the sequence is FAGLILVTFSFMHGDKIFSIL. Over 67–71 the chain is Periplasmic; it reads KNRKD. A helical transmembrane segment spans residues 72-92; sequence ALSLLIFSVVGALTVQLTFLL. The Cytoplasmic portion of the chain corresponds to 93–99; it reads TIEKSNA. Residues 100-120 form a helical membrane-spanning segment; that stretch reads ATATVLQFLSPTIIVAWFALA. At 121 to 124 the chain is on the periplasmic side; that stretch reads RRTR. The chain crosses the membrane as a helical span at residues 125–145; the sequence is PGILVLTAILTSLIGTFLLVT. Over 146–151 the chain is Cytoplasmic; it reads HGNPTS. A helical transmembrane segment spans residues 152-172; sequence LSISSAALFWGIASAFAAAFY. The region spanning 167-291 is the EamA 2 domain; the sequence is FAAAFYTTWP…ILSSVILISL (125 aa). The Periplasmic segment spans residues 173–184; the sequence is TTWPSRLIAQYG. The helical transmembrane segment at 185 to 205 threads the bilayer; sequence TLPVVGWSMSFGGLILLPFYA. Over 206–216 the chain is Cytoplasmic; it reads KEGTHFAVSGS. The chain crosses the membrane as a helical span at residues 217–237; it reads LILAFFYLVVIGTSLTFSLYL. At 238-263 the chain is on the periplasmic side; that stretch reads KGAQLIGGPKASILSCAEPLSSALLS. The chain crosses the membrane as a helical span at residues 264–284; that stretch reads LLLLGISFTLPDWLGTLLILS. The Cytoplasmic segment spans residues 285-300; that stretch reads SVILISLDSRRRARAA.

Belongs to the EamA transporter family.

The protein resides in the cell inner membrane. This is an uncharacterized protein from Salmonella typhimurium (strain LT2 / SGSC1412 / ATCC 700720).